We begin with the raw amino-acid sequence, 814 residues long: Acyl-coenzyme A dehydrogenase (814 aa).

The active-site Proton acceptor is the Glu-497.

This sequence belongs to the acyl-CoA dehydrogenase family. The cofactor is FAD.

The catalysed reaction is a medium-chain 2,3-saturated fatty acyl-CoA + oxidized [electron-transfer flavoprotein] + H(+) = a medium-chain (2E)-enoyl-CoA + reduced [electron-transfer flavoprotein]. It carries out the reaction a long-chain 2,3-saturated fatty acyl-CoA + oxidized [electron-transfer flavoprotein] + H(+) = a long-chain (2E)-enoyl-CoA + reduced [electron-transfer flavoprotein]. It functions in the pathway lipid metabolism; fatty acid beta-oxidation. In terms of biological role, catalyzes the dehydrogenation of acyl-coenzymes A (acyl-CoAs) to 2-enoyl-CoAs, the first step of the beta-oxidation cycle of fatty acid degradation. Is required for the utilization of medium- and long-chain fatty acids as sole carbon sources for growth. Is needed for bacterial survival during carbone-source starvation. This is Acyl-coenzyme A dehydrogenase (fadE) from Salmonella typhi.